Consider the following 213-residue polypeptide: Imidazole glycerol phosphate synthase subunit HisH (213 aa).

The Glutamine amidotransferase type-1 domain occupies 6–213 (LVTVIDYGMG…FKNFLNWNGQ (208 aa)). The active-site Nucleophile is the C86. Catalysis depends on residues H192 and E194.

As to quaternary structure, heterodimer of HisH and HisF.

The protein localises to the cytoplasm. It catalyses the reaction 5-[(5-phospho-1-deoxy-D-ribulos-1-ylimino)methylamino]-1-(5-phospho-beta-D-ribosyl)imidazole-4-carboxamide + L-glutamine = D-erythro-1-(imidazol-4-yl)glycerol 3-phosphate + 5-amino-1-(5-phospho-beta-D-ribosyl)imidazole-4-carboxamide + L-glutamate + H(+). The enzyme catalyses L-glutamine + H2O = L-glutamate + NH4(+). It functions in the pathway amino-acid biosynthesis; L-histidine biosynthesis; L-histidine from 5-phospho-alpha-D-ribose 1-diphosphate: step 5/9. Functionally, IGPS catalyzes the conversion of PRFAR and glutamine to IGP, AICAR and glutamate. The HisH subunit catalyzes the hydrolysis of glutamine to glutamate and ammonia as part of the synthesis of IGP and AICAR. The resulting ammonia molecule is channeled to the active site of HisF. The sequence is that of Imidazole glycerol phosphate synthase subunit HisH from Hydrogenovibrio crunogenus (strain DSM 25203 / XCL-2) (Thiomicrospira crunogena).